Reading from the N-terminus, the 177-residue chain is ATP synthase subunit delta (177 aa).

Belongs to the ATPase delta chain family. In terms of assembly, F-type ATPases have 2 components, F(1) - the catalytic core - and F(0) - the membrane proton channel. F(1) has five subunits: alpha(3), beta(3), gamma(1), delta(1), epsilon(1). F(0) has three main subunits: a(1), b(2) and c(10-14). The alpha and beta chains form an alternating ring which encloses part of the gamma chain. F(1) is attached to F(0) by a central stalk formed by the gamma and epsilon chains, while a peripheral stalk is formed by the delta and b chains.

It is found in the cell membrane. Its function is as follows. F(1)F(0) ATP synthase produces ATP from ADP in the presence of a proton or sodium gradient. F-type ATPases consist of two structural domains, F(1) containing the extramembraneous catalytic core and F(0) containing the membrane proton channel, linked together by a central stalk and a peripheral stalk. During catalysis, ATP synthesis in the catalytic domain of F(1) is coupled via a rotary mechanism of the central stalk subunits to proton translocation. This protein is part of the stalk that links CF(0) to CF(1). It either transmits conformational changes from CF(0) to CF(1) or is implicated in proton conduction. The sequence is that of ATP synthase subunit delta from Buchnera aphidicola subsp. Schizaphis graminum (strain Sg).